Reading from the N-terminus, the 181-residue chain is Large ribosomal subunit protein uL5 (181 aa).

The protein belongs to the universal ribosomal protein uL5 family. In terms of assembly, part of the 50S ribosomal subunit; part of the 5S rRNA/L5/L18/L25 subcomplex. Contacts the 5S rRNA and the P site tRNA. Forms a bridge to the 30S subunit in the 70S ribosome.

Its function is as follows. This is one of the proteins that bind and probably mediate the attachment of the 5S RNA into the large ribosomal subunit, where it forms part of the central protuberance. In the 70S ribosome it contacts protein S13 of the 30S subunit (bridge B1b), connecting the 2 subunits; this bridge is implicated in subunit movement. Contacts the P site tRNA; the 5S rRNA and some of its associated proteins might help stabilize positioning of ribosome-bound tRNAs. In Helicobacter pylori (strain G27), this protein is Large ribosomal subunit protein uL5.